The primary structure comprises 308 residues: Porphobilinogen deaminase (308 aa).

Cys242 carries the S-(dipyrrolylmethanemethyl)cysteine modification.

Belongs to the HMBS family. As to quaternary structure, monomer. Dipyrromethane is required as a cofactor.

It carries out the reaction 4 porphobilinogen + H2O = hydroxymethylbilane + 4 NH4(+). Its pathway is porphyrin-containing compound metabolism; protoporphyrin-IX biosynthesis; coproporphyrinogen-III from 5-aminolevulinate: step 2/4. Functionally, tetrapolymerization of the monopyrrole PBG into the hydroxymethylbilane pre-uroporphyrinogen in several discrete steps. The protein is Porphobilinogen deaminase of Alkalilimnicola ehrlichii (strain ATCC BAA-1101 / DSM 17681 / MLHE-1).